Reading from the N-terminus, the 169-residue chain is MLYSKKKEFVKFLEGIYKNANTIVAIHYHGLTVAQLTQIRKDLRVSGARLKIVKNTLAKIAVANLKVKQVDIFSGPIAIAYSEDYITVPKVILRFADQYPSLKVVGGFVDQKVATMNDIEQLASLATSESHKGNFLSLLQIPIRRFATVSHAPLVKLVTILKNYVNNKS.

It belongs to the universal ribosomal protein uL10 family. As to quaternary structure, part of the ribosomal stalk of the 50S ribosomal subunit. The N-terminus interacts with L11 and the large rRNA to form the base of the stalk. The C-terminus forms an elongated spine to which L12 dimers bind in a sequential fashion forming a multimeric L10(L12)X complex.

In terms of biological role, forms part of the ribosomal stalk, playing a central role in the interaction of the ribosome with GTP-bound translation factors. The sequence is that of Large ribosomal subunit protein uL10 from Orientia tsutsugamushi (strain Ikeda) (Rickettsia tsutsugamushi).